The chain runs to 257 residues: Isoprenyl transferase (257 aa).

The active site involves Asp-34. Asp-34 lines the Mg(2+) pocket. Substrate is bound by residues 35–38 (GNGR), Trp-39, Arg-47, His-51, and 79–81 (STE). Asn-82 (proton acceptor) is an active-site residue. Residues Trp-83, Arg-85, Arg-202, and 208-210 (RLS) contribute to the substrate site. Residue Glu-221 participates in Mg(2+) binding.

The protein belongs to the UPP synthase family. As to quaternary structure, homodimer. Requires Mg(2+) as cofactor.

Catalyzes the condensation of isopentenyl diphosphate (IPP) with allylic pyrophosphates generating different type of terpenoids. The sequence is that of Isoprenyl transferase from Geobacillus kaustophilus (strain HTA426).